The primary structure comprises 192 residues: Transcription termination/antitermination protein NusG (192 aa).

The protein belongs to the NusG family.

Functionally, participates in transcription elongation, termination and antitermination. This Rickettsia prowazekii (strain Madrid E) protein is Transcription termination/antitermination protein NusG.